Consider the following 304-residue polypeptide: Calcium release-activated calcium channel protein 1 (304 aa).

Over residues 1 to 11 the composition is skewed to pro residues; it reads MHPEPAPPPNN. The interval 1-49 is disordered; the sequence is MHPEPAPPPNNSNPELPLSGGSSTSGSRRSRRRSGDGEPTGAPPLPPPP. Residues 1–88 lie on the Cytoplasmic side of the membrane; it reads MHPEPAPPPN…KLYLSRAKLK (88 aa). Residues 3 to 49 form a required for generation of inwardly rectifying CRAC currents region; that stretch reads PEPAPPPNNSNPELPLSGGSSTSGSRRSRRRSGDGEPTGAPPLPPPP. Over residues 12–27 the composition is skewed to low complexity; it reads SNPELPLSGGSSTSGS. The segment at 39–60 is AKAP5 association region; sequence PTGAPPLPPPPAVSYPDWIGQS. The interval 71–91 is interaction with STIM1; that stretch reads SMQALSWRKLYLSRAKLKASS. The chain crosses the membrane as a helical span at residues 89–106; the sequence is ASSRTSALLSGFAMVAMV. At 107-120 the chain is on the extracellular side; that stretch reads EVQLDTDHDYPPGL. A helical transmembrane segment spans residues 121–141; the sequence is LIVFSACTTVLVAVHLFALMI. Residues 142 to 174 lie on the Cytoplasmic side of the membrane; the sequence is STCILPNIEAVSNVHNLNSVKESPHERMHRHIE. Residues 175 to 195 form a helical membrane-spanning segment; it reads LAWAFSTVIGTLLFLAEVVLL. The Extracellular portion of the chain corresponds to 196–237; it reads CWVKFLPLKRQAGQPSPTKPPTEPAVVVANSSNNGGITPGEA. Asparagine 225 is a glycosylation site (N-linked (GlcNAc...) asparagine). Residues 238 to 258 form a helical membrane-spanning segment; the sequence is AAIASTAIMVPCGLVFIVFAV. The Cytoplasmic segment spans residues 259-304; that stretch reads HFYRSLVSHKTDRQFQELNELAEFARLQDQLDHRGDHSLTPGTHYA. Residues 275–295 form an interaction with STIM1 region; sequence ELNELAEFARLQDQLDHRGDH. Threonine 298 is subject to Phosphothreonine.

The protein belongs to the Orai family. Oligomerizes in homomeric and heteromeric ORAI complexes. Native CRAC channels most likely consist of hexameric ORAI heteromers, implying that diverse ORAI1, ORAI2 and ORAI3 subunit combinations with distinct biophysical properties can operate in a cell-type specific way. ARC channels are heteropentamers consisting of three ORAI1 and two ORAI3 subunits. Interacts with STIM1 and STIM2; this regulates channel activity. Interacts with CALM; this may displace STIM1 and STIM2 and might thereby modulate channel activity. Interacts (via N-terminus) with AKAP5 upon store depletion. Interacts with CRACR2A/EFCAB4B; the interaction is direct and takes place in absence of Ca(2+). Forms a complex with CRACR2A/EFCAB4B and STIM1 at low concentration of Ca(2+), the complex dissociates at elevated Ca(2+) concentrations. Interacts with ASPH (isoform 8). Interacts with SLC35G1. Interacts with UBQLN1. Interacts with ADCY8; interaction is calcium store depletion independent; interaction occurs in membrane raft; interaction increases markedly after store depletion; positively regulates SOCE-induced adenylate cyclase activity; contributes to the targeting of ADCY8 to discrete regions of the plasma membrane that are shielded from other calcium events. Interacts with EFHB; the interaction takes place upon Ca(2+)-store depletion. Interacts (via N- and C-termini) with ATP2C2 (via N-terminus); this interaction regulates Ca(2+) influx at the plasma membrane. Interacts with TSPAN18; this interaction regulates ORAI1 exit from the endoplasmic (ER), and/or Golgi, and trafficking to the cell surface. In terms of processing, N-glycosylated. N-glycosylation inhibits channel activity in T cells. Post-translationally, ubiquitinated. Cys-195 is oxidated, leading to inactivation of channel activity.

The protein resides in the cell membrane. The protein localises to the basolateral cell membrane. It catalyses the reaction Ca(2+)(in) = Ca(2+)(out). With respect to regulation, oxidation at Cys-196 leads to inactivation of channel activity. Functionally, pore-forming subunit of two major inward rectifying Ca(2+) channels at the plasma membrane: Ca(2+) release-activated Ca(2+) (CRAC) channels and arachidonate-regulated Ca(2+)-selective (ARC) channels. Assembles with ORAI2 and ORAI3 to form hexameric CRAC channels that mediate Ca(2+) influx upon depletion of endoplasmic reticulum Ca(2+) store and channel activation by Ca(2+) sensor STIM1, a process known as store-operated Ca(2+) entry (SOCE). Various pore subunit combinations may account for distinct CRAC channel spatiotemporal and cell-type specific dynamics. ORAI1 mainly contributes to the generation of Ca(2+) plateaus involved in sustained Ca(2+) entry and is dispensable for cytosolic Ca(2+) oscillations, whereas ORAI2 and ORAI3 generate oscillatory patterns. CRAC channels assemble in Ca(2+) signaling microdomains where Ca(2+) influx is coupled to calmodulin and calcineurin signaling and activation of NFAT transcription factors recruited to ORAI1 via AKAP5. Activates NFATC2/NFAT1 and NFATC3/NFAT4-mediated transcriptional responses. CRAC channels are the main pathway for Ca(2+) influx in T cells and promote the immune response to pathogens by activating NFAT-dependent cytokine and chemokine transcription. Assembles with ORAI3 to form channels that mediate store-independent Ca(2+) influx in response to inflammatory metabolites arachidonate or its derivative leukotriene C4, termed ARC and LRC channels respectively. Plays a prominent role in Ca(2+) influx at the basolateral membrane of mammary epithelial cells independently of the Ca(2+) content of endoplasmic reticulum or Golgi stores. May mediate transepithelial transport of large quantities of Ca(2+) for milk secretion. The sequence is that of Calcium release-activated calcium channel protein 1 (Orai1) from Rattus norvegicus (Rat).